A 428-amino-acid chain; its full sequence is Enolase (428 aa).

Glutamine 163 lines the (2R)-2-phosphoglycerate pocket. Glutamate 205 serves as the catalytic Proton donor. Mg(2+) contacts are provided by aspartate 242, glutamate 285, and aspartate 312. The (2R)-2-phosphoglycerate site is built by lysine 337, arginine 366, serine 367, and lysine 388. Lysine 337 (proton acceptor) is an active-site residue.

It belongs to the enolase family. Mg(2+) serves as cofactor.

Its subcellular location is the cytoplasm. It is found in the secreted. The protein resides in the cell surface. The enzyme catalyses (2R)-2-phosphoglycerate = phosphoenolpyruvate + H2O. It participates in carbohydrate degradation; glycolysis; pyruvate from D-glyceraldehyde 3-phosphate: step 4/5. Its function is as follows. Catalyzes the reversible conversion of 2-phosphoglycerate (2-PG) into phosphoenolpyruvate (PEP). It is essential for the degradation of carbohydrates via glycolysis. In Neisseria meningitidis serogroup C / serotype 2a (strain ATCC 700532 / DSM 15464 / FAM18), this protein is Enolase.